A 310-amino-acid chain; its full sequence is tRNA-5-methyluridine(54) 2-sulfurtransferase (310 aa).

Residues cysteine 3, cysteine 6, cysteine 22, and histidine 25 each contribute to the Zn(2+) site. Residues alanine 53 and isoleucine 79 each coordinate ATP. 2 residues coordinate [4Fe-4S] cluster: cysteine 128 and cysteine 131. Cysteine 128 and cysteine 220 are joined by a disulfide. Lysine 135 and glycine 154 together coordinate ATP. Residue cysteine 220 coordinates [4Fe-4S] cluster. Residues cysteine 272, cysteine 275, cysteine 284, and cysteine 287 each coordinate Zn(2+).

Belongs to the TtcA family. TtuA subfamily. In terms of assembly, homodimer. The cofactor is [4Fe-4S] cluster. Requires Mg(2+) as cofactor.

The enzyme catalyses 5-methyluridine(54) in tRNA + hydrogen sulfide + ATP = 5-methyl-2-thiouridine(54) in tRNA + AMP + diphosphate. Its pathway is tRNA modification. Functionally, catalyzes the ATP-dependent 2-thiolation of 5-methyluridine residue at position 54 in the T loop of tRNAs, leading to 5-methyl-2-thiouridine (m(5)s(2)U or s(2)T). This modification allows thermal stabilization of tRNAs in thermophilic microorganisms, and is required for cell growth at high temperatures. Can use free sulfide as sulfur source in vitro, which may be also the sulfur source in vivo. The chain is tRNA-5-methyluridine(54) 2-sulfurtransferase from Pyrococcus horikoshii (strain ATCC 700860 / DSM 12428 / JCM 9974 / NBRC 100139 / OT-3).